The chain runs to 470 residues: MKVLVVDAGGRGNAIAHAFSRSEQVKEIYIAPGNGGSEFFEKCKIAELDGKKIPSIRAIDEIVRFAKKCEVDLAYIGPEEPLSLGLVDRLEEEGIPAVGPKKEATILEASKCWAKDFLKRIGVPIPEYANFDNPEEAKEYIREKFNNGIVVKADGLAAGKGVYVCDSVEEALRAVDEIMVQKKFGEAGNRIVVEERLRGIEVAFTAMTDGKTVKPFGHARDYKRAFDSDDIEGLRDFYIGLTKKFYTKAQIEQLYREGKLINPNTGGMGAVSPHPAVTEEVEQRIMEMVVEPIIENFDKEFKGVLYPVIMLVEENGELIPKVLEINVRDCDPGAEAKLPRLKSDMAEISMAVVEGRLDEVEMRFSSDYCVAVCAVSGALKGREGLKPGYPADHYTSQPITGIEEAMKEAIIYANGIAKTNGYVTTGGRVLTVVGMGQSIEEARSKAYSALEKISFPGMRYRRTIGLDVPE.

The 240-residue stretch at 115–354 (KDFLKRIGVP…MAEISMAVVE (240 aa)) folds into the ATP-grasp domain. Residue 142–203 (REKFNNGIVV…EERLRGIEVA (62 aa)) participates in ATP binding. Residues Glu324 and Asn326 each coordinate Mg(2+).

It belongs to the GARS family. It depends on Mg(2+) as a cofactor. Mn(2+) is required as a cofactor.

It carries out the reaction 5-phospho-beta-D-ribosylamine + glycine + ATP = N(1)-(5-phospho-beta-D-ribosyl)glycinamide + ADP + phosphate + H(+). It participates in purine metabolism; IMP biosynthesis via de novo pathway; N(1)-(5-phospho-D-ribosyl)glycinamide from 5-phospho-alpha-D-ribose 1-diphosphate: step 2/2. This is Phosphoribosylamine--glycine ligase (purD) from Archaeoglobus fulgidus (strain ATCC 49558 / DSM 4304 / JCM 9628 / NBRC 100126 / VC-16).